The sequence spans 124 residues: Non-structural protein 2 (124 aa).

A DLNP; interaction with MAP1B motif is present at residues 121 to 124 (DLNP).

Belongs to the pneumovirus non-structural protein 2 family. In terms of assembly, monomer (instable). Homomultimer. Heteromultimer with NS1. Interacts with host RIGI (via N-terminus); this interaction prevents host signaling pathway involved in interferon production. Interacts with host MAP1B/microtubule-associated protein 1B.

It localises to the host mitochondrion. Plays a major role in antagonizing the type I IFN-mediated antiviral response. Acts cooperatively with NS1 to repress activation and nuclear translocation of host IFN-regulatory factor IRF3. Interacts with the host cytoplasmic sensor of viral nucleic acids RIGI and prevents the interaction with its downstream partner MAVS. Together with NS2, participates in the proteasomal degradation of host STAT2, IRF3, IRF7, TBK1 and RIGI through a NS-degradasome involving CUL2 and Elongin-C. The degradasome requires an intact mitochondrial MAVS. Induces host SOCS1 expression. Induces activation of NF-kappa-B. Suppresses premature apoptosis by an NF-kappa-B-dependent, interferon-independent mechanism promoting continued viral replication. This is Non-structural protein 2 (1B) from Homo sapiens (Human).